The chain runs to 1390 residues: DNA-directed RNA polymerase subunit beta'' (1390 aa).

Zn(2+) is bound by residues Cys-224, Cys-295, Cys-302, and Cys-305.

This sequence belongs to the RNA polymerase beta' chain family. RpoC2 subfamily. In terms of assembly, in plastids the minimal PEP RNA polymerase catalytic core is composed of four subunits: alpha, beta, beta', and beta''. When a (nuclear-encoded) sigma factor is associated with the core the holoenzyme is formed, which can initiate transcription. Requires Zn(2+) as cofactor.

It localises to the plastid. The protein localises to the chloroplast. It catalyses the reaction RNA(n) + a ribonucleoside 5'-triphosphate = RNA(n+1) + diphosphate. Its function is as follows. DNA-dependent RNA polymerase catalyzes the transcription of DNA into RNA using the four ribonucleoside triphosphates as substrates. The polypeptide is DNA-directed RNA polymerase subunit beta'' (Daucus carota (Wild carrot)).